Consider the following 479-residue polypeptide: Heparin cofactor 2 (479 aa).

A signal peptide spans 1-23 (MKHPAYTLLLSLIMSMCAGSKGL). Asparagine 31 carries an N-linked (GlcNAc...) asparagine glycan. 2 repeat units span residues 55 to 65 (GEEDDDYLDLE) and 69 to 79 (SEDDDYIYVVD). The tract at residues 55–79 (GEEDDDYLDLEKLLSEDDDYIYVVD) is 2 X 11 AA approximate repeats, Asp/Glu-rich (acidic) (hirudin-like). 2 positions are modified to sulfotyrosine: tyrosine 61 and tyrosine 74. An N-linked (GlcNAc...) asparagine glycan is attached at asparagine 168. Residues 172-192 (KYEVTTIHNLFRKLTHRLFRR) are glycosaminoglycan-binding site. N-linked (GlcNAc...) asparagine glycosylation is found at asparagine 367 and asparagine 403.

It belongs to the serpin family. Different composition of the N-linked oligosaccharides appears to yield a 68-kDa and a 72-kDa form.

In terms of biological role, thrombin inhibitor activated by the glycosaminoglycans, heparin or dermatan sulfate. In the presence of the latter, HC-II becomes the predominant thrombin inhibitor in place of antithrombin III (AT). The protein is Heparin cofactor 2 (Serpind1) of Rattus norvegicus (Rat).